We begin with the raw amino-acid sequence, 314 residues long: DNA-directed RNA polymerase subunit alpha (314 aa).

Residues 1-227 (MTYFQIECVE…SLFYPLTNLN (227 aa)) are alpha N-terminal domain (alpha-NTD). The segment at 239–314 (EEEINQVLIE…LPKEKNIQNT (76 aa)) is alpha C-terminal domain (alpha-CTD).

Belongs to the RNA polymerase alpha chain family. In terms of assembly, in plastids the minimal PEP RNA polymerase catalytic core is composed of four subunits: alpha, beta, beta', and beta''. When a (nuclear-encoded) sigma factor is associated with the core the holoenzyme is formed, which can initiate transcription.

Its subcellular location is the plastid. The protein localises to the chloroplast. It catalyses the reaction RNA(n) + a ribonucleoside 5'-triphosphate = RNA(n+1) + diphosphate. DNA-dependent RNA polymerase catalyzes the transcription of DNA into RNA using the four ribonucleoside triphosphates as substrates. In Gracilaria tenuistipitata var. liui (Red alga), this protein is DNA-directed RNA polymerase subunit alpha.